The chain runs to 136 residues: UPF0102 protein BBta_0181 (136 aa).

Belongs to the UPF0102 family.

This chain is UPF0102 protein BBta_0181, found in Bradyrhizobium sp. (strain BTAi1 / ATCC BAA-1182).